The following is a 162-amino-acid chain: UPF0114 protein Sfri_3655 (162 aa).

Transmembrane regions (helical) follow at residues 15–35, 53–73, and 136–156; these read IMAP…IKFF, LVLI…LIMV, and IMWY…MGYL.

The protein belongs to the UPF0114 family.

Its subcellular location is the cell membrane. In Shewanella frigidimarina (strain NCIMB 400), this protein is UPF0114 protein Sfri_3655.